The chain runs to 85 residues: Large ribosomal subunit protein eL34 (85 aa).

It belongs to the eukaryotic ribosomal protein eL34 family.

This chain is Large ribosomal subunit protein eL34, found in Saccharolobus islandicus (strain Y.N.15.51 / Yellowstone #2) (Sulfolobus islandicus).